The chain runs to 338 residues: RNA 3'-terminal phosphate cyclase (338 aa).

ATP contacts are provided by residues Gln103 and 283–287 (YLADQ). His308 acts as the Tele-AMP-histidine intermediate in catalysis.

Belongs to the RNA 3'-terminal cyclase family. Type 1 subfamily.

It is found in the cytoplasm. The catalysed reaction is a 3'-end 3'-phospho-ribonucleotide-RNA + ATP = a 3'-end 2',3'-cyclophospho-ribonucleotide-RNA + AMP + diphosphate. Its function is as follows. Catalyzes the conversion of 3'-phosphate to a 2',3'-cyclic phosphodiester at the end of RNA. The mechanism of action of the enzyme occurs in 3 steps: (A) adenylation of the enzyme by ATP; (B) transfer of adenylate to an RNA-N3'P to produce RNA-N3'PP5'A; (C) and attack of the adjacent 2'-hydroxyl on the 3'-phosphorus in the diester linkage to produce the cyclic end product. The biological role of this enzyme is unknown but it is likely to function in some aspects of cellular RNA processing. The chain is RNA 3'-terminal phosphate cyclase from Escherichia coli O17:K52:H18 (strain UMN026 / ExPEC).